A 901-amino-acid polypeptide reads, in one-letter code: HTH-type transcriptional regulator MalT (901 aa).

ATP is bound at residue 39 to 46; that stretch reads SPAGYGKT. Residues 829–894 form the HTH luxR-type domain; it reads ELIRTSPLTQ…AAVQHAQKLL (66 aa). A DNA-binding region (H-T-H motif) is located at residues 853 to 872; the sequence is NEQIAGELEVAATTIKTHIR.

This sequence belongs to the MalT family. In terms of assembly, monomer in solution. Oligomerizes to an active state in the presence of the positive effectors ATP and maltotriose.

With respect to regulation, activated by ATP and maltotriose, which are both required for DNA binding. In terms of biological role, positively regulates the transcription of the maltose regulon whose gene products are responsible for uptake and catabolism of malto-oligosaccharides. Specifically binds to the promoter region of its target genes, recognizing a short DNA motif called the MalT box. This is HTH-type transcriptional regulator MalT from Escherichia coli (strain 55989 / EAEC).